The following is an 88-amino-acid chain: Apolipoprotein C-I (88 aa).

Positions 1 to 26 are cleaved as a signal peptide; sequence MRLFISLPVLIVVLAMALEGPAPAQA.

Belongs to the apolipoprotein C1 family.

It is found in the secreted. Functionally, inhibitor of lipoprotein binding to the low density lipoprotein (LDL) receptor, LDL receptor-related protein, and very low density lipoprotein (VLDL) receptor. Associates with high density lipoproteins (HDL) and the triacylglycerol-rich lipoproteins in the plasma and makes up about 10% of the protein of the VLDL and 2% of that of HDL. Appears to interfere directly with fatty acid uptake and is also the major plasma inhibitor of cholesteryl ester transfer protein (CETP). Modulates the interaction of APOE with beta-migrating VLDL and inhibits binding of beta-VLDL to the LDL receptor-related protein. Binds free fatty acids and reduces their intracellular esterification. The protein is Apolipoprotein C-I (APOC1) of Myodes glareolus (Bank vole).